The primary structure comprises 223 residues: Phosphoribosylformylglycinamidine synthase subunit PurQ (223 aa).

Residues 2-223 form the Glutamine amidotransferase type-1 domain; sequence KFAVLKFPGS…MVNSWREQNV (222 aa). Residue C85 is the Nucleophile of the active site. Catalysis depends on residues H193 and E195.

In terms of assembly, part of the FGAM synthase complex composed of 1 PurL, 1 PurQ and 2 PurS subunits.

It localises to the cytoplasm. It carries out the reaction N(2)-formyl-N(1)-(5-phospho-beta-D-ribosyl)glycinamide + L-glutamine + ATP + H2O = 2-formamido-N(1)-(5-O-phospho-beta-D-ribosyl)acetamidine + L-glutamate + ADP + phosphate + H(+). The enzyme catalyses L-glutamine + H2O = L-glutamate + NH4(+). It functions in the pathway purine metabolism; IMP biosynthesis via de novo pathway; 5-amino-1-(5-phospho-D-ribosyl)imidazole from N(2)-formyl-N(1)-(5-phospho-D-ribosyl)glycinamide: step 1/2. In terms of biological role, part of the phosphoribosylformylglycinamidine synthase complex involved in the purines biosynthetic pathway. Catalyzes the ATP-dependent conversion of formylglycinamide ribonucleotide (FGAR) and glutamine to yield formylglycinamidine ribonucleotide (FGAM) and glutamate. The FGAM synthase complex is composed of three subunits. PurQ produces an ammonia molecule by converting glutamine to glutamate. PurL transfers the ammonia molecule to FGAR to form FGAM in an ATP-dependent manner. PurS interacts with PurQ and PurL and is thought to assist in the transfer of the ammonia molecule from PurQ to PurL. The protein is Phosphoribosylformylglycinamidine synthase subunit PurQ of Staphylococcus saprophyticus subsp. saprophyticus (strain ATCC 15305 / DSM 20229 / NCIMB 8711 / NCTC 7292 / S-41).